A 1661-amino-acid polypeptide reads, in one-letter code: MATNGVKAEPTKVNILGKDSIVVDYGLWQSYIAEDLLQNIPSSTYVLITDTNIGPTYTPTFERSFSAAAASIASSPRLLTYTIPPGETSKSRSTKAAVEDWLLSQGCTRDTVIIALGGGVIGDMIGYVAATYMRGIKFVNVPTTLLAMVDSSIGGKTAIDVPAGKNLVGAFWQPERIYIDLQFLETLPKREVINGMAEVVKTAAIWNEEEFTALEGNADAILAAMDQKTTDGRRNFDSIAGILKRIVLGSVRVKAEVVSADEREGGLRNLLNFGHSIGHAYEAILTPQILHGECVAIGMVKEAELARYLGVLDPSAVARLTKCIASYGLPTSLADKTVRRRSANKHCPVDELIKIMAVDKKNAGAVKKIVLLSGIGRTYEKKASSVVDRDIKIALSPSISVHPGIPSDLNVTCTPPGSKSVSNRVLVLAALGTGSCRITNLLHSDDTQVMLDALAKMQGASFSWENDGKELVVTGNGGQLKASSNELYLGNAGTAARFLTSVTALCQAQEGVTSTVVTGNARMKERPIGPLVKSLRTMGIDVDYQEKEGSLPLRISACGGFGSEAFSGEIELTANVSSQYVSSILLSAPYSKKPVTLRLVGGKVISQPYIDMTIAMMASFGVQVKRDQSDPNTYRIPNKPYTNPAEYVVESDASSATYPLAIAAITGTTCTVPNIGSGSLQGDARFAIEVLKPMGCKVEQTKTSTTVTGPPRGELKAVKEIDMEPMTDAFLTASVLAAVCSSNGTSTTTRIYGIANQRVKECNRIQAMEDELAKFGITCRQFDDGIEVDGRGYQLDAPKVGIHCYDDHRVAMSFGVLGLVAPEPVLILEKDCTGKTWPGYWDILNQQFKAELTGVEPPQQSHGKKITSKGQQKSIFIIGMRGAGKTTAGGWASRALGWPLIDLDTALEQHMSMTIPEIIKTSGWDGFRKAELELLQRTVKEKPTGHIFACGGGIVEIPEARKILVDYQKSGGIVLLVSRDINKVVEFLQIDKTRPAYVEDMMGVWLRRKPWYVECSNYRFHSQAAGSKALAHTQTEIGRFLNIITGRTSTLQDIKKKKQSFFVCLSAPNLEPCAKDLPEIVVGADAVELRVDLLEDPEGSEGLPTPEFVIEQLTILRNVTTIPVIFTLRTKAQGGKFPDEAYAEARSLYQSAIRLGCEFVDLEMTMPEEVLREVSETRGFTEIIASHHDPKGELSWTNGSWMKYYNRALQYGTVIKLVGVAKSLQDNFALAEFKSWAETAHPTPLIAINMGEHGKLSRILNGFMAPVSHPLLPSATAPGQLSAADIRRGLSLMGEIPTKKFCIFGSPISQSPSPRLHNRLFRETGLPHTYGLHETTDASSIRDIIRAPDFGGASVTIPLKQDVRPLIDGVGPEVEAIGALNTIVPEVSIDESTGKEITRLIGRNTDYLGMILILRNTGAHGVGAGLVIGGGGTSRAAIYALKEMGYGPIYLLGRNAHKIEALKSDFPSSYNLQVITSPEQVSSLDAMPTVAIGTVPADQPLDPTIRETLCAFFEKAKDVKTERGEERILLEMAYKPPVTALIQLSQDAGWKTVNGLEVLVGQGVHQFEYWTGVKPLYSVARLQLLSHHRLPRYSHLNSNYSNHSAHCSTVPAKTSILPYHRPLYTLAFVIKLHGLVAHCRTLRDAFSFSVFLTYSWSLGDW.

The tract at residues 1–388 (MATNGVKAEP…YEKKASSVVD (388 aa)) is 3-dehydroquinate synthase. NAD(+) is bound by residues 50–52 (DTN), 87–90 (ETSK), 118–120 (GGV), and Asp-123. Arg-134 is a binding site for 7-phospho-2-dehydro-3-deoxy-D-arabino-heptonate. Position 143 to 144 (143 to 144 (TT)) interacts with NAD(+). Positions 150 and 156 each coordinate 7-phospho-2-dehydro-3-deoxy-D-arabino-heptonate. An NAD(+)-binding site is contributed by Lys-165. Position 166 (Asn-166) interacts with 7-phospho-2-dehydro-3-deoxy-D-arabino-heptonate. NAD(+)-binding positions include 183–186 (FLET) and Asn-194. Glu-198 contacts Zn(2+). 7-phospho-2-dehydro-3-deoxy-D-arabino-heptonate is bound by residues 198–201 (EVVK) and Lys-254. Glu-264 acts as the Proton acceptor; for 3-dehydroquinate synthase activity in catalysis. 7-phospho-2-dehydro-3-deoxy-D-arabino-heptonate contacts are provided by residues 268 to 272 (RNLLN) and His-275. His-275 is a binding site for Zn(2+). Residue His-279 is the Proton acceptor; for 3-dehydroquinate synthase activity of the active site. Residues His-291 and Lys-360 each coordinate 7-phospho-2-dehydro-3-deoxy-D-arabino-heptonate. His-291 is a binding site for Zn(2+). Residues 401–850 (VHPGIPSDLN…WDILNQQFKA (450 aa)) form an EPSP synthase region. The active-site For EPSP synthase activity is Cys-832. Residues 872–1064 (QKSIFIIGMR…KKKKQSFFVC (193 aa)) are shikimate kinase. Residue 879–886 (GMRGAGKT) coordinates ATP. The interval 1065–1285 (LSAPNLEPCA…TAPGQLSAAD (221 aa)) is 3-dehydroquinase. His-1188 (proton acceptor; for 3-dehydroquinate dehydratase activity) is an active-site residue. Lys-1216 acts as the Schiff-base intermediate with substrate; for 3-dehydroquinate dehydratase activity in catalysis. Residues 1298 to 1661 (TKKFCIFGSP…LTYSWSLGDW (364 aa)) are shikimate dehydrogenase.

It in the N-terminal section; belongs to the sugar phosphate cyclases superfamily. Dehydroquinate synthase family. This sequence in the 2nd section; belongs to the EPSP synthase family. In the 3rd section; belongs to the shikimate kinase family. The protein in the 4th section; belongs to the type-I 3-dehydroquinase family. It in the C-terminal section; belongs to the shikimate dehydrogenase family. In terms of assembly, homodimer. It depends on Zn(2+) as a cofactor.

Its subcellular location is the cytoplasm. The catalysed reaction is 7-phospho-2-dehydro-3-deoxy-D-arabino-heptonate = 3-dehydroquinate + phosphate. It carries out the reaction 3-dehydroquinate = 3-dehydroshikimate + H2O. It catalyses the reaction shikimate + NADP(+) = 3-dehydroshikimate + NADPH + H(+). The enzyme catalyses shikimate + ATP = 3-phosphoshikimate + ADP + H(+). The catalysed reaction is 3-phosphoshikimate + phosphoenolpyruvate = 5-O-(1-carboxyvinyl)-3-phosphoshikimate + phosphate. It functions in the pathway metabolic intermediate biosynthesis; chorismate biosynthesis; chorismate from D-erythrose 4-phosphate and phosphoenolpyruvate: step 2/7. The protein operates within metabolic intermediate biosynthesis; chorismate biosynthesis; chorismate from D-erythrose 4-phosphate and phosphoenolpyruvate: step 3/7. It participates in metabolic intermediate biosynthesis; chorismate biosynthesis; chorismate from D-erythrose 4-phosphate and phosphoenolpyruvate: step 4/7. Its pathway is metabolic intermediate biosynthesis; chorismate biosynthesis; chorismate from D-erythrose 4-phosphate and phosphoenolpyruvate: step 5/7. It functions in the pathway metabolic intermediate biosynthesis; chorismate biosynthesis; chorismate from D-erythrose 4-phosphate and phosphoenolpyruvate: step 6/7. Functionally, the AROM polypeptide catalyzes 5 consecutive enzymatic reactions in prechorismate polyaromatic amino acid biosynthesis. The chain is Pentafunctional AROM polypeptide from Phaeosphaeria nodorum (strain SN15 / ATCC MYA-4574 / FGSC 10173) (Glume blotch fungus).